Reading from the N-terminus, the 89-residue chain is Small ribosomal subunit protein uS14 (89 aa).

The protein belongs to the universal ribosomal protein uS14 family. As to quaternary structure, part of the 30S ribosomal subunit. Contacts proteins S3 and S10.

Functionally, binds 16S rRNA, required for the assembly of 30S particles and may also be responsible for determining the conformation of the 16S rRNA at the A site. The sequence is that of Small ribosomal subunit protein uS14 from Chlorobium phaeobacteroides (strain BS1).